We begin with the raw amino-acid sequence, 508 residues long: Maturase K (508 aa).

It belongs to the intron maturase 2 family. MatK subfamily.

Its subcellular location is the plastid. The protein resides in the chloroplast. Its function is as follows. Usually encoded in the trnK tRNA gene intron. Probably assists in splicing its own and other chloroplast group II introns. This Huidobria chilensis (Loasa chilensis) protein is Maturase K.